A 339-amino-acid chain; its full sequence is Trace amine-associated receptor 1 (339 aa).

Topologically, residues 1 to 24 (MMPFCHNIINISCVKNNWSNDVRA) are extracellular. Intrachain disulfides connect Cys-5/Cys-178, Cys-13/Cys-88, and Cys-96/Cys-182. Residues Asn-10 and Asn-17 are each glycosylated (N-linked (GlcNAc...) asparagine). The chain crosses the membrane as a helical span at residues 25 to 49 (SLYSLMVLIILTTLVGNLIVIVSIS). Residues 50-59 (HFKQLHTPTN) lie on the Cytoplasmic side of the membrane. Residues 60-81 (WLIHSMATVDFLLGCLVMPYSM) traverse the membrane as a helical segment. The Extracellular portion of the chain corresponds to 82-96 (VRSAEHCWYFGEVFC). The helical transmembrane segment at 97–119 (KIHTSTDIMLSSASIFHLSFISI) threads the bilayer. Asp-103 contacts 2-phenylethylamine. Over 120 to 139 (DRYYAVCDPLRYKAKMNILV) the chain is Cytoplasmic. The helical transmembrane segment at 140–161 (ICVMIFISWSVPAVFAFGMIFL) threads the bilayer. Over 162–188 (ELNFKGAEEIYYKHVHCRGGCSVFFSK) the chain is Extracellular. Positions 175-186 (HVHCRGGCSVFF) are extracellular Loop 2 (ECL2). A helical membrane pass occupies residues 189-211 (ISGVLTFMTSFYIPGSIMLCVYY). Over 212–249 (RIYLIAKEQARLISDANQKLQIGLEMKNGISQSKERKA) the chain is Cytoplasmic. Residues 250–273 (VKTLGIVMGVFLICWCPFFICTVM) form a helical membrane-spanning segment. Residues 274–286 (DPFLHYIIPPTLN) are Extracellular-facing. Residues 287–307 (DVLIWFGYLNSTFNPMVYAFF) form a helical membrane-spanning segment. Over 308–339 (YPWFRKALKMMLFGKIFQKDSSRCKLFLELSS) the chain is Cytoplasmic.

This sequence belongs to the G-protein coupled receptor 1 family. Expressed at low level in both the central and peripheral nervous system. Moderately expressed in stomach. Low levels in amygdala, kidney, and lung, and small intestine. Trace amounts in cerebellum, dorsal root ganglia, hippocampus, hypothalamus, liver, medulla, pancreas, pituitary, pontine reticular formation, prostate, skeletal muscle and spleen.

It localises to the endomembrane system. The protein localises to the endoplasmic reticulum membrane. Its subcellular location is the cell membrane. Its activity is regulated as follows. Activated by SEP-363856 small molecule: IHCH-7179 acts both as an agonist activator for HTR1A and TAAR1. Functionally, intracellular G-protein coupled receptor for trace amines, which recognizes endogenous amine-containing metabolites such as beta-phenylethylamine (beta-PEA), 3-iodothyronamine (T1AM), isoamylamine (IAA), cadaverine (CAD), cyclohexylamine (CHA), p-tyramine (p-TYR), trimethylamine (TMA), octopamine and tryptamine. Also functions as a receptor for various drugs and psychoactive substances, such as amphetamine and methamphetamine. Unresponsive to classical biogenic amines, such as epinephrine and histamine and only partially activated by dopamine and serotonin. Expressed in both the central and peripheral nervous system: TAAR1 activation regulates the activity of several neurotransmitter signaling pathways by (1) decreasing the basal firing rates of the neurons involved and by (2) lowering the sensitivity of receptors to neurotransmitters. Ligand binding causes a conformation change that triggers signaling via guanine nucleotide-binding proteins (G proteins) and modulates the activity of downstream effectors. TAAR1 is coupled with different G(i)/G(o)-, G(s)- or G(q)/G(11) classes of G alpha proteins depending on the ligand. CAD-binding is coupled to G(i)/G(o) G alpha proteins and mediates inhibition of adenylate cyclase activity. T1AM- or beta-PEA-binding is coupled to G(s) G alpha proteins and mediates activation of adenylate cyclase activity. CHA- or IAA-binding is coupled to G(q)/G(11) G alpha proteins and activates phospholipase C-beta, releasing diacylglycerol (DAG) and inositol 1,4,5-trisphosphate (IP3) second messengers. TMA-binding is coupled with all three G(i)/G(o)-, G(s)- or G(q)/G(11) G alpha protein subtypes. Amphetamine-binding is coupled with G(s)- or G(12)/G(13) G alpha protein subtypes. This Homo sapiens (Human) protein is Trace amine-associated receptor 1.